The chain runs to 417 residues: UDP-N-acetylglucosamine 1-carboxyvinyltransferase (417 aa).

22–23 contacts phosphoenolpyruvate; it reads KN. UDP-N-acetyl-alpha-D-glucosamine is bound at residue R92. C116 serves as the catalytic Proton donor. The residue at position 116 (C116) is a 2-(S-cysteinyl)pyruvic acid O-phosphothioketal. The UDP-N-acetyl-alpha-D-glucosamine site is built by D304 and I326.

It belongs to the EPSP synthase family. MurA subfamily.

It is found in the cytoplasm. It carries out the reaction phosphoenolpyruvate + UDP-N-acetyl-alpha-D-glucosamine = UDP-N-acetyl-3-O-(1-carboxyvinyl)-alpha-D-glucosamine + phosphate. Its pathway is cell wall biogenesis; peptidoglycan biosynthesis. In terms of biological role, cell wall formation. Adds enolpyruvyl to UDP-N-acetylglucosamine. The polypeptide is UDP-N-acetylglucosamine 1-carboxyvinyltransferase (Desulfosudis oleivorans (strain DSM 6200 / JCM 39069 / Hxd3) (Desulfococcus oleovorans)).